The following is a 466-amino-acid chain: Asparagine--tRNA ligase (466 aa).

This sequence belongs to the class-II aminoacyl-tRNA synthetase family. As to quaternary structure, homodimer.

The protein resides in the cytoplasm. The catalysed reaction is tRNA(Asn) + L-asparagine + ATP = L-asparaginyl-tRNA(Asn) + AMP + diphosphate + H(+). The sequence is that of Asparagine--tRNA ligase from Vibrio vulnificus (strain YJ016).